The sequence spans 295 residues: Pyridoxal 5'-phosphate synthase subunit PdxS (295 aa).

Aspartate 25 lines the D-ribose 5-phosphate pocket. Lysine 82 (schiff-base intermediate with D-ribose 5-phosphate) is an active-site residue. A D-ribose 5-phosphate-binding site is contributed by glycine 154. D-glyceraldehyde 3-phosphate is bound at residue arginine 166. D-ribose 5-phosphate contacts are provided by residues glycine 215 and 236-237; that span reads GS.

This sequence belongs to the PdxS/SNZ family. In terms of assembly, in the presence of PdxT, forms a dodecamer of heterodimers.

The enzyme catalyses aldehydo-D-ribose 5-phosphate + D-glyceraldehyde 3-phosphate + L-glutamine = pyridoxal 5'-phosphate + L-glutamate + phosphate + 3 H2O + H(+). Its pathway is cofactor biosynthesis; pyridoxal 5'-phosphate biosynthesis. Catalyzes the formation of pyridoxal 5'-phosphate from ribose 5-phosphate (RBP), glyceraldehyde 3-phosphate (G3P) and ammonia. The ammonia is provided by the PdxT subunit. Can also use ribulose 5-phosphate and dihydroxyacetone phosphate as substrates, resulting from enzyme-catalyzed isomerization of RBP and G3P, respectively. The polypeptide is Pyridoxal 5'-phosphate synthase subunit PdxS (Dictyoglomus turgidum (strain DSM 6724 / Z-1310)).